Here is a 514-residue protein sequence, read N- to C-terminus: UDP-N-acetylmuramoyl-L-alanyl-D-glutamate--2,6-diaminopimelate ligase (514 aa).

Residue T37 coordinates UDP-N-acetyl-alpha-D-muramoyl-L-alanyl-D-glutamate. 125–131 contributes to the ATP binding site; sequence GTNGKTS. Residues 167-168, S194, Q200, and R202 each bind UDP-N-acetyl-alpha-D-muramoyl-L-alanyl-D-glutamate; that span reads TT. K234 is subject to N6-carboxylysine. Residues R406, 430–433, G481, and E485 contribute to the meso-2,6-diaminopimelate site; that span reads DNPR. Residues 430 to 433 carry the Meso-diaminopimelate recognition motif motif; the sequence is DNPR.

The protein belongs to the MurCDEF family. MurE subfamily. The cofactor is Mg(2+). In terms of processing, carboxylation is probably crucial for Mg(2+) binding and, consequently, for the gamma-phosphate positioning of ATP.

It localises to the cytoplasm. It catalyses the reaction UDP-N-acetyl-alpha-D-muramoyl-L-alanyl-D-glutamate + meso-2,6-diaminopimelate + ATP = UDP-N-acetyl-alpha-D-muramoyl-L-alanyl-gamma-D-glutamyl-meso-2,6-diaminopimelate + ADP + phosphate + H(+). The protein operates within cell wall biogenesis; peptidoglycan biosynthesis. Catalyzes the addition of meso-diaminopimelic acid to the nucleotide precursor UDP-N-acetylmuramoyl-L-alanyl-D-glutamate (UMAG) in the biosynthesis of bacterial cell-wall peptidoglycan. This Ralstonia nicotianae (strain ATCC BAA-1114 / GMI1000) (Ralstonia solanacearum) protein is UDP-N-acetylmuramoyl-L-alanyl-D-glutamate--2,6-diaminopimelate ligase.